We begin with the raw amino-acid sequence, 201 residues long: 3-isopropylmalate dehydratase small subunit (201 aa).

This sequence belongs to the LeuD family. LeuD type 1 subfamily. Heterodimer of LeuC and LeuD.

It catalyses the reaction (2R,3S)-3-isopropylmalate = (2S)-2-isopropylmalate. It functions in the pathway amino-acid biosynthesis; L-leucine biosynthesis; L-leucine from 3-methyl-2-oxobutanoate: step 2/4. Functionally, catalyzes the isomerization between 2-isopropylmalate and 3-isopropylmalate, via the formation of 2-isopropylmaleate. This Erwinia tasmaniensis (strain DSM 17950 / CFBP 7177 / CIP 109463 / NCPPB 4357 / Et1/99) protein is 3-isopropylmalate dehydratase small subunit.